A 2925-amino-acid polypeptide reads, in one-letter code: MGVLASALCWLLCVWLPWGEQAAESLRVQRLGERVVDSGRSGARGMRNVKGMRNGPAQTRVSSSSSHQEATLAMGDKATVVGGQQAEAPDSVAMSSWERRLHRAKCAPSYLFSCFNGGECVHPAFCDCRRFNATGPRCQMVYNAGPERDSICRAWGQHHVETFDGLYYYLSGKGSYTLVGRHEPEGQSFSIQVHNDPQCGSSPYTCSRAVSLFFVGEQEIHLAKEVTHGGMRVQLPHVMGSARLQQLAGYVIVRHQSAFTLAWDGASAVYIKMSPELLGWTHGLCGNNNADPKDDLVTSSGKLTDDVVEFVHSWQEQAPNQPPGPTTSSLPRPPCLQQNPGTMQGVYEQCEALLRPPFDACHAYVSPLPFTASCTSDLCQSMGDVATWCRALAEYARACAQAGRPLQGWRTQLRQCTVHCKEKAFTYNECIACCPASCHPRASCVDSEIACVDGCYCPNGLIFEDGGCVAPAECPCEFHGTLYPPGSVVKEDCNTCTCTSGKWECSTAVCPAECSVTGDIHFTTFDGRRYTFPATCQYILAKSRSSGTFTVTLQNAPCGLNQDGACVQSVSVILHQDPRRQVTLTQAGDVLLFDQYKIIPPYTDDAFEIRRLSSVFLRVRTNVGVRVLYDREGLRLYLQVDQRWVEDTVGLCGTFNGNTQDDFLSPVGVPESTPQLFGNSWKTLSACSPLVSGSPLDPCDVHLQAASYSVQACSVLTGEMFAPCSAFLSPVPYFEQCRRDACRCGQPCLCATLAHYAHLCRRHGLPVDFRARLPACALSCEASKEYSPCVAPCGRTCQDLASPEACGVDGGDDLSRDECVEGCACPPDTYLDTQADLCVPRNQCSCHFQGVDYPPGDSDIPSLGHCHCKDGVMSCDSRAPAAACPAGQVFVNCSDLHTDLELSRERTCEQQLLNLSVSARGPCLSGCACPQGLLRHGDACFLPEECPCTWKGKEYFPGDQVMSPCHTCVCQRGSFQCTLHPCASTCTAYGDRHYRTFDGLPFDFVGACKVHLVKSTSDVSFSVIVENVNCYSSGMICRKFISINVGNSLIVFDDDSGNPSPESFLDDKQEVHTWRVGFFTLVHFPQEHITLLWDQRTTVHVQAGPQWQGQLAGLCGNFDLKTINEMRTPENLELTNPQEFGSSWAAVECPDTLDPRDMCVLNPLREPFAKKECSILLSEVFEICHPVVDVTWFYSNCLTDTCGCSQGGDCECFCASVSAYAHQCCQHGVAVDWRTPRLCPYDCDFFNKVLGKGPYQLSSLAAGGALVGMKAVGDDIVLVRTEDVAPADIVSFLLTAALYKAKAHDPDVVSLEAADRPNFFLHVTANGSLELAKWQGRDTFQQHASFLLHRGTRQAGLVALESLAKPSSFLYVSGAVLALRLYEHTEVFRRGTLFRLLDAKPSGAAYPICEWRYDACASPCFQTCRDPRAASCRDVPRVEGCVPVCPTPQVLDEVTQRCVYLEDCVEPAVWVPTEALGNETLPPSQGLPTPSDEEPQLSQESPRTPTHRPALTPAAPLTTALNPPVTATEEPVVSPGPTQTTLQQPLELTASQLPAGPTESPASKGVTASLLAIPHTPESSSLPVALQTPTPGMVSGAMETTRVTVIFAGSPNITVSSRSPPAPRFPLMTKAVTVRGHGSLPVRTTPPQPSLTASPSSRPVASPGAISRSPTSSGSHKAVLTPAVTKVISRTGVPQPTQAQSASSPSTPLTVAGTAAEQVPVSPLATRSLEIVLSTEKGEAGHSQPMGSPASPQPHPLPSAPPRPAQHTTMATRSPALPPETPAAASLSTATDGLAATPFMSLESTRPSQLLSGLPPDTSLPLAKVGTSAPVATPGPKASVITTPLQPQATTLPAQTLSPVLPFTPAAMTQAHPPTHIAPPAAGTAPGLLLGATLPTSGVLPVAEGTASMVSVVPRKSTTGKVAILSKQVSLPTSMYGSAEGGPTELTPATSHPLTPLVAEPEGAQAGTALPVPTSYALSRVSARTAPQDSMLVLLPQLAEAHGTSAGPHLAAEPVDEATTEPSGRSAPALSIVEGLAEALATTTEANTSTTCVPIAEQDCVRHICLEGQLIRVNQSQHCPQGAAPPRCGILGLAVRVGGDRCCPLWECACRCSIFPDLSFVTFDGSHVALFKEAIYILSQSPDEMLTVHVLDCKSANLGHLNWPPFCLVMLNMTHLAHQVTIDRFNRKVTVDLQPVWPPVSRYGFRIEDTGHMYMILTPSDIQIQWLHSSGLMIVEASKTSKAQGHGLCGICDGDAANDLTLKDGSVVGGAEDPAPFLDSWQVPSSLTSVGQTRFRPDSCATTDCSPCLRMVSNRTFSACHRFVPPESFCELWIRDTKYVQQPCVALTVYVAMCHKFHVCIEWRRSDYCPFLCSSDSTYQACVTACEPPKTCQDGILGPLDPEHCQVLGEGCVCSEGTILHRRHSALCIPEAKCACTDSMGVPRALGETWNSSLSGCCQHQCQAPDTIVPVDLGCPSPRPESCLRFGEVALLLPTKDPCCLGTVCVCNQTLCEGLAPTCRPGHRLLTHFQEDSCCPSYSCECDPDLCEAELVPSCRQDQILITGRLGDSCCTSYFCACGDCPDSIPECQEGEALTVHRNTTELCCPLYQCVCENFRCPQVQCGLGTALVEVWSPDRCCPYKSCECDCDTIPVPRCHLWEKSQLDEEFMHSVENVCGCAKYECVKAPVCLSRELGVMQPGQTVVELSADGVCHTSRCTTVLDPLTNFYQINTTSVLCDIHCEANQEYEHPRDLAACCGSCRNVSCLFTFPNGTTSLFLPGASWIADCARHHCSSTPLGAVLVRSPISCPPLNETECAKVGGSVVPSLEGCCRTCKEDGRSCKKVTIRMTIRKNECRSSTPVNLVSCDGRCPSASIYNYNINTYARFCKCCREVGLQRRSVQLFCATNATWVPYTVQEPTDCACQWS.

The first 25 residues, 1–25 (MGVLASALCWLLCVWLPWGEQAAES), serve as a signal peptide directing secretion. The segment at 39 to 69 (GRSGARGMRNVKGMRNGPAQTRVSSSSSHQE) is disordered. The span at 56–69 (PAQTRVSSSSSHQE) shows a compositional bias: polar residues. The EGF-like domain maps to 102–139 (HRAKCAPSYLFSCFNGGECVHPAFCDCRRFNATGPRCQ). Intrachain disulfides connect Cys-106–Cys-120, Cys-114–Cys-126, Cys-128–Cys-138, Cys-152–Cys-285, and Cys-199–Cys-206. The VWFD 1 domain occupies 150–322 (SICRAWGQHH…SWQEQAPNQP (173 aa)). Residues 316-335 (EQAPNQPPGPTTSSLPRPPC) are disordered. A compositionally biased stretch (polar residues) spans 326 to 335 (TTSSLPRPPC). Positions 512 to 688 (AECSVTGDIH…NSWKTLSACS (177 aa)) constitute a VWFD 2 domain. Disulfide bonds link Cys-514–Cys-652, Cys-536–Cys-687, and Cys-558–Cys-566. A TIL domain is found at 780–844 (CEASKEYSPC…ADLCVPRNQC (65 aa)). A glycan (N-linked (GlcNAc...) asparagine) is linked at Asn-914. Residues 984–1152 (STCTAYGDRH…SWAAVECPDT (169 aa)) enclose the VWFD 3 domain. Disulfide bonds link Cys-986–Cys-1115 and Cys-1030–Cys-1037. The disordered stretch occupies residues 1476 to 1540 (LGNETLPPSQ…PVVSPGPTQT (65 aa)). The N-linked (GlcNAc...) asparagine glycan is linked to Asn-1478. Residues 1502–1528 (PRTPTHRPALTPAAPLTTALNPPVTAT) are compositionally biased toward low complexity. Asn-1612 carries an N-linked (GlcNAc...) asparagine glycan. Disordered regions lie at residues 1636–1679 (GHGS…HKAV), 1693–1715 (VPQP…AGTA), and 1737–1788 (KGEA…ASLS). The segment covering 1650–1659 (SLTASPSSRP) has biased composition (polar residues). Low complexity predominate over residues 1694–1708 (PQPTQAQSASSPSTP). Positions 1751 to 1764 (SPQPHPLPSAPPRP) are enriched in pro residues. Residues 2110–2289 (CRCSIFPDLS…SWQVPSSLTS (180 aa)) enclose the VWFD 4 domain. Cystine bridges form between Cys-2112–Cys-2249, Cys-2840–Cys-2889, Cys-2854–Cys-2903, Cys-2865–Cys-2920, and Cys-2869–Cys-2922. Positions 2840–2925 (CKKVTIRMTI…EPTDCACQWS (86 aa)) constitute a CTCK domain.

It belongs to the otogelin family. Post-translationally, N-glycosylated. Not O-glycosylated.

The protein localises to the apical cell membrane. The protein resides in the secreted. Its subcellular location is the extracellular space. In terms of biological role, glycoprotein specific to acellular membranes of the inner ear. May be required for the anchoring of the otoconial membranes and cupulae to the underlying neuroepithelia in the vestibule. May be involved in the organization and/or stabilization of the fibrillar network that compose the tectorial membrane in the cochlea. May play a role in mechanotransduction processes. The polypeptide is Otogelin (OTOG) (Homo sapiens (Human)).